Here is a 229-residue protein sequence, read N- to C-terminus: UPF0758 protein CLH_0547 (229 aa).

In terms of domain architecture, MPN spans 107 to 229; sequence KIMSPNDIAM…FISLKEKGFI (123 aa). Zn(2+) contacts are provided by His178, His180, and Asp191. Positions 178–191 match the JAMM motif motif; it reads HNHPSGDPTPSKED.

This sequence belongs to the UPF0758 family.

The protein is UPF0758 protein CLH_0547 of Clostridium botulinum (strain Alaska E43 / Type E3).